The sequence spans 129 residues: Small ribosomal subunit protein uS9 (129 aa).

It belongs to the universal ribosomal protein uS9 family.

The polypeptide is Small ribosomal subunit protein uS9 (rpsI) (Helicobacter pylori (strain J99 / ATCC 700824) (Campylobacter pylori J99)).